A 148-amino-acid chain; its full sequence is Truncated transcription factor CAULIFLOWER D (148 aa).

Positions 1–61 (MGRGRVEMKR…GKLFEYSSES (61 aa)) constitute an MADS-box domain. The K-box; partial domain occupies 90-148 (QTNWSMEYSRLKAKIELWERNQRHYLGEDLESISIKELQNLEQQLDTSLKHIRSRKVCK).

In terms of assembly, homodimer capable of binding to CArG-box sequences.

It localises to the nucleus. Probable transcription factor that promotes early floral meristem identity in synergy with APETALA1, FRUITFULL and LEAFY. Is required subsequently for the transition of an inflorescence meristem into a floral meristem. Seems to be partially redundant to the function of APETALA1. The polypeptide is Truncated transcription factor CAULIFLOWER D (CAL-D) (Brassica oleracea var. botrytis (Cauliflower)).